The primary structure comprises 370 residues: Putative FBD-associated F-box protein At1g50980 (370 aa).

The F-box domain occupies 31–77; the sequence is IRTISEFPDKVLLKILSLLPSKDVVATGVLSKRWRSLWKDVKTFRTS. The FBD domain maps to 292 to 343; that stretch reads LMGNQPDLIPKSLSSHLEILEWRQYNDTAQEREAAKYILANASGLRKATFYT.

The protein is Putative FBD-associated F-box protein At1g50980 of Arabidopsis thaliana (Mouse-ear cress).